Consider the following 287-residue polypeptide: Lycopene elongase/hydratase (287 aa).

Transmembrane regions (helical) follow at residues 15 to 35 (ISWVNTAYPFGLAYLLNAGEI), 37 to 57 (WLFWLGIVFFLIPYNIAMYGI), 97 to 117 (IPFLVILFIFGTWMSSLWLTI), 137 to 157 (FIDALTSSTHFTSPALIGATI), 166 to 186 (MWIALGSFFLWGMASQILGAV), 218 to 238 (LLAAVLVTTLPNPAWIIGIAI), and 265 to 285 (VFLWLNYFVGAVITILLIAIH).

Belongs to the UbiA prenyltransferase family.

It localises to the cell membrane. The enzyme catalyses all-trans-lycopene + dimethylallyl diphosphate + A + H2O = nonaflavuxanthin + AH2 + diphosphate. The catalysed reaction is nonaflavuxanthin + dimethylallyl diphosphate + A + H2O = flavuxanthin + AH2 + diphosphate. Its pathway is carotenoid biosynthesis. Catalyzes the elongation of the C(40) carotenoid all-trans-lycopene to the acyclic C(50) carotenoid flavuxanthin during decaprenoxanthin biosynthesis. Acts as a bifunctional enzyme that catalyzes the elongation of lycopene by attaching a C(5) isoprene unit at C-2, as well as the hydroxylation of the new isoprene unit. The enzyme acts at both ends of the substrate, forming the C(50) carotenoid flavuxanthin via the C(45) intermediate nonaflavuxanthin. The protein is Lycopene elongase/hydratase of Corynebacterium glutamicum (Brevibacterium saccharolyticum).